Here is a 269-residue protein sequence, read N- to C-terminus: Formamidopyrimidine-DNA glycosylase (269 aa).

The Schiff-base intermediate with DNA role is filled by proline 2. The active-site Proton donor is glutamate 3. Lysine 57 functions as the Proton donor; for beta-elimination activity in the catalytic mechanism. Histidine 90, arginine 109, and lysine 150 together coordinate DNA. An FPG-type zinc finger spans residues glutamine 235 to cysteine 269. The active-site Proton donor; for delta-elimination activity is the arginine 259.

The protein belongs to the FPG family. Monomer. Zn(2+) serves as cofactor.

The catalysed reaction is Hydrolysis of DNA containing ring-opened 7-methylguanine residues, releasing 2,6-diamino-4-hydroxy-5-(N-methyl)formamidopyrimidine.. It catalyses the reaction 2'-deoxyribonucleotide-(2'-deoxyribose 5'-phosphate)-2'-deoxyribonucleotide-DNA = a 3'-end 2'-deoxyribonucleotide-(2,3-dehydro-2,3-deoxyribose 5'-phosphate)-DNA + a 5'-end 5'-phospho-2'-deoxyribonucleoside-DNA + H(+). Involved in base excision repair of DNA damaged by oxidation or by mutagenic agents. Acts as a DNA glycosylase that recognizes and removes damaged bases. Has a preference for oxidized purines, such as 7,8-dihydro-8-oxoguanine (8-oxoG). Has AP (apurinic/apyrimidinic) lyase activity and introduces nicks in the DNA strand. Cleaves the DNA backbone by beta-delta elimination to generate a single-strand break at the site of the removed base with both 3'- and 5'-phosphates. This Vibrio vulnificus (strain CMCP6) protein is Formamidopyrimidine-DNA glycosylase.